The sequence spans 103 residues: Co-chaperonin GroES (103 aa).

It belongs to the GroES chaperonin family. In terms of assembly, heptamer of 7 subunits arranged in a ring. Interacts with the chaperonin GroEL.

The protein resides in the cytoplasm. Its function is as follows. Together with the chaperonin GroEL, plays an essential role in assisting protein folding. The GroEL-GroES system forms a nano-cage that allows encapsulation of the non-native substrate proteins and provides a physical environment optimized to promote and accelerate protein folding. GroES binds to the apical surface of the GroEL ring, thereby capping the opening of the GroEL channel. This chain is Co-chaperonin GroES, found in Synechococcus sp. (strain CC9902).